The following is a 630-amino-acid chain: Arginine--tRNA ligase (630 aa).

The short motif at 120–130 (ANPIHPLHIGH) is the 'HIGH' region element.

Belongs to the class-I aminoacyl-tRNA synthetase family.

It is found in the cytoplasm. The catalysed reaction is tRNA(Arg) + L-arginine + ATP = L-arginyl-tRNA(Arg) + AMP + diphosphate. This is Arginine--tRNA ligase from Pyrobaculum arsenaticum (strain DSM 13514 / JCM 11321 / PZ6).